The sequence spans 602 residues: Elongation factor 4 (602 aa).

Positions 7 to 189 (KYIRNFCIIA…KIVDMIPCPE (183 aa)) constitute a tr-type G domain. Residues 19 to 24 (DHGKST) and 136 to 139 (NKID) each bind GTP.

Belongs to the TRAFAC class translation factor GTPase superfamily. Classic translation factor GTPase family. LepA subfamily.

The protein resides in the cell membrane. It catalyses the reaction GTP + H2O = GDP + phosphate + H(+). Its function is as follows. Required for accurate and efficient protein synthesis under certain stress conditions. May act as a fidelity factor of the translation reaction, by catalyzing a one-codon backward translocation of tRNAs on improperly translocated ribosomes. Back-translocation proceeds from a post-translocation (POST) complex to a pre-translocation (PRE) complex, thus giving elongation factor G a second chance to translocate the tRNAs correctly. Binds to ribosomes in a GTP-dependent manner. The chain is Elongation factor 4 from Ruminiclostridium cellulolyticum (strain ATCC 35319 / DSM 5812 / JCM 6584 / H10) (Clostridium cellulolyticum).